The primary structure comprises 474 residues: 6-phospho-beta-galactosidase (474 aa).

The D-galactose 6-phosphate site is built by glutamine 19, histidine 116, asparagine 159, glutamate 160, and asparagine 297. Residue glutamate 160 is the Proton donor of the active site. Residue glutamate 375 is the Nucleophile of the active site. D-galactose 6-phosphate-binding residues include serine 433, tryptophan 434, lysine 440, and tyrosine 442.

Belongs to the glycosyl hydrolase 1 family.

The catalysed reaction is a 6-phospho-beta-D-galactoside + H2O = D-galactose 6-phosphate + an alcohol. It participates in carbohydrate metabolism; lactose degradation; D-galactose 6-phosphate and beta-D-glucose from lactose 6-phosphate: step 1/1. In Lacticaseibacillus casei (strain BL23) (Lactobacillus casei), this protein is 6-phospho-beta-galactosidase.